Here is a 362-residue protein sequence, read N- to C-terminus: MADCSLRPHVHWAQRHRELYLRVELSDVKNPDVSIADNVLRFRAQGHGAKGDNIYEFQIEFLEPVEPKPVCRVTQRQLNITVQKKESSWWERLTKQEKRPLFLAPDFDRWLDESDAEMELKEKEEEKINKMKIESRVPKDPFKHLKKGYLIMYNLVQFLGFSWIFVNMTVRLFILGKDSFYDTFHTIADMMYFCQTLALMEILNSLIGLVRSPLIPAVIQVFGRNFILFVVLGSLEEMQSKAVVFFLFYFWSIIELFRYPYYMLSCMGIEWKPLTWLRYTSWIPLYPLGGLAEAVCLIQSIPIFSETGKFSLGLPNPLNVTIQFSFLLQMYLIALFLGLFVNFRYLYKQRKQHLGPKKRKMK.

Residues 1–149 (MADCSLRPHV…DPFKHLKKGY (149 aa)) lie on the Cytoplasmic side of the membrane. One can recognise a CS domain in the interval 5–94 (SLRPHVHWAQ…KESSWWERLT (90 aa)). The stretch at 111-135 (LDESDAEMELKEKEEEKINKMKIES) forms a coiled coil. Residues 150 to 170 (LIMYNLVQFLGFSWIFVNMTV) traverse the membrane as a helical segment. The Lumenal portion of the chain corresponds to 171–189 (RLFILGKDSFYDTFHTIAD). A helical membrane pass occupies residues 190–210 (MMYFCQTLALMEILNSLIGLV). Over 211–212 (RS) the chain is Cytoplasmic. A helical transmembrane segment spans residues 213–233 (PLIPAVIQVFGRNFILFVVLG). Topologically, residues 234–242 (SLEEMQSKA) are lumenal. A helical membrane pass occupies residues 243-263 (VVFFLFYFWSIIELFRYPYYM). Topologically, residues 264–282 (LSCMGIEWKPLTWLRYTSW) are cytoplasmic. A helical transmembrane segment spans residues 283–303 (IPLYPLGGLAEAVCLIQSIPI). Active-site residues include Tyr-286 and Glu-293. The Lumenal segment spans residues 304–319 (FSETGKFSLGLPNPLN). Residues 320 to 340 (VTIQFSFLLQMYLIALFLGLF) form a helical membrane-spanning segment. Residues 341 to 362 (VNFRYLYKQRKQHLGPKKRKMK) are Cytoplasmic-facing.

Belongs to the very long-chain fatty acids dehydratase HACD family.

It localises to the endoplasmic reticulum membrane. It carries out the reaction a very-long-chain (3R)-3-hydroxyacyl-CoA = a very-long-chain (2E)-enoyl-CoA + H2O. It catalyses the reaction (3R)-hydroxyhexadecanoyl-CoA = (2E)-hexadecenoyl-CoA + H2O. It functions in the pathway lipid metabolism; fatty acid biosynthesis. In terms of biological role, catalyzes the third of the four reactions of the long-chain fatty acids elongation cycle. This endoplasmic reticulum-bound enzymatic process, allows the addition of two carbons to the chain of long- and very long-chain fatty acids/VLCFAs per cycle. This enzyme catalyzes the dehydration of the 3-hydroxyacyl-CoA intermediate into trans-2,3-enoyl-CoA, within each cycle of fatty acid elongation. Thereby, it participates in the production of VLCFAs of different chain lengths that are involved in multiple biological processes as precursors of membrane lipids and lipid mediators. Involved in Rac1-signaling pathways leading to the modulation of gene expression. The polypeptide is Very-long-chain (3R)-3-hydroxyacyl-CoA dehydratase (Gallus gallus (Chicken)).